A 143-amino-acid polypeptide reads, in one-letter code: Putative RNA polymerase II subunit B1 CTD phosphatase RPAP2 homolog (143 aa).

An RTR1-type zinc finger spans residues 46–129 (SLLCEIGPPN…VPTSPLWLRD (84 aa)). Residues cysteine 69, cysteine 74, cysteine 105, and cysteine 109 each contribute to the Zn(2+) site.

It belongs to the RPAP2 family.

The protein localises to the nucleus. It carries out the reaction O-phospho-L-seryl-[protein] + H2O = L-seryl-[protein] + phosphate. It catalyses the reaction O-phospho-L-threonyl-[protein] + H2O = L-threonyl-[protein] + phosphate. Its function is as follows. Putative RNA polymerase II subunit B1 C-terminal domain (CTD) phosphatase involved in RNA polymerase II transcription regulation. This Drosophila melanogaster (Fruit fly) protein is Putative RNA polymerase II subunit B1 CTD phosphatase RPAP2 homolog.